The following is a 229-amino-acid chain: Glucose-induced degradation protein 8-B homolog (229 aa).

A LisH domain is found at 26–58 (QRADMNRLIMNYLVTEGFKEAAEKFRMESGIEP). The CTLH domain maps to 64 to 121 (SLDERIKIREMVLKGQIQEAIALINSLHPELLDTNRYLYFHLQQQHLIELIRLRETEA).

As to quaternary structure, identified in the CTLH complex that contains at least MAEA, RMND5A (or alternatively its paralog RMND5B), GID8, WDR26, and RANBP9 and/or RANBP10. Interacts with CTNNB1.

The protein resides in the cytoplasm. The protein localises to the nucleus. Its function is as follows. Core component of the CTLH E3 ubiquitin-protein ligase complex that selectively accepts ubiquitin from UBE2H and mediates ubiquitination and subsequent proteasomal degradation of target proteins. Acts as a positive regulator of Wnt signaling pathway by promoting beta-catenin (CTNNB1) nuclear accumulation. Required for normal Wnt signaling and normal dorsoventral patterning during embryogenesis. The protein is Glucose-induced degradation protein 8-B homolog (gid8b) of Danio rerio (Zebrafish).